The primary structure comprises 492 residues: Probable small intestine urate exporter (492 aa).

The segment at 1–20 is disordered; that stretch reads MSTGADLKAREGDIPSDNMT. Asn-18, Asn-44, Asn-53, Asn-63, Asn-72, and Asn-87 each carry an N-linked (GlcNAc...) asparagine glycan. Helical transmembrane passes span 112-132, 134-154, 156-176, 198-218, 225-245, 287-307, 327-347, 363-383, 393-413, 426-446, and 456-476; these read LSYG…VFGA, YVVG…PLAA, AGVA…VMVL, IAAS…GLIC, YIFY…FPLV, LPLW…STVM, ILSA…GLLA, KLFT…LPWV, FLVL…INFL, LLQV…GFFI, and NVFF…LIFS.

The protein belongs to the major facilitator superfamily. Sodium/anion cotransporter family. As to expression, expressed in the small intestine (at protein level).

The protein localises to the apical cell membrane. It carries out the reaction 3 Na(+)(out) + phosphate(out) = 3 Na(+)(in) + phosphate(in). The enzyme catalyses urate(out) + n chloride(in) = urate(in) + n chloride(out). It catalyses the reaction L-thyroxine(out) = L-thyroxine(in). The catalysed reaction is 3,3',5-triiodo-L-thyronine(out) = 3,3',5-triiodo-L-thyronine(in). In terms of biological role, acts as a membrane potential-dependent organic anion transporter, the transport requires a low concentration of chloride ions. Mediates chloride-dependent transport of urate. Mediates sodium-independent high affinity transport of thyroid hormones including L-thyroxine (T4) and 3,3',5-triiodo-L-thyronine (T3). Can actively transport inorganic phosphate into cells via Na(+) cotransport. In Mus musculus (Mouse), this protein is Probable small intestine urate exporter (Slc17a4).